Consider the following 166-residue polypeptide: Protein-export protein SecB (166 aa).

It belongs to the SecB family. As to quaternary structure, homotetramer, a dimer of dimers. One homotetramer interacts with 1 SecA dimer.

The protein resides in the cytoplasm. In terms of biological role, one of the proteins required for the normal export of preproteins out of the cell cytoplasm. It is a molecular chaperone that binds to a subset of precursor proteins, maintaining them in a translocation-competent state. It also specifically binds to its receptor SecA. The polypeptide is Protein-export protein SecB (Acidiphilium cryptum (strain JF-5)).